Reading from the N-terminus, the 579-residue chain is Protein inscuteable homolog (579 aa).

The tract at residues 74–89 (SVQRWMEDLKLMTECE) is important for interaction with GPSM2. The PDZ-binding motif lies at 576 to 579 (ESFV).

In terms of assembly, interacts with ALS2CR19/PAR3B and F2RL2/PAR3. Interacts with GPSM1/AGS3 and GPSM2/LGN (via TPR repeat region). Identified in a complex with GPSM2 and F2RL2. In terms of tissue distribution, isoform 1 is expressed in various tissues with stronger expression in liver, kidney and small intestine. Isoform 2 is abundantly expressed in small intestine and to a lower extent in lung and pancreas.

The protein localises to the cytoplasm. The protein resides in the cell cortex. May function as an adapter linking the Par3 complex to the GPSM1/GPSM2 complex. Involved in spindle orientation during mitosis. May regulate cell proliferation and differentiation in the developing nervous system. May play a role in the asymmetric division of fibroblasts and participate in the process of stratification of the squamous epithelium. The sequence is that of Protein inscuteable homolog (INSC) from Homo sapiens (Human).